Consider the following 333-residue polypeptide: 4-hydroxyproline 2-epimerase (333 aa).

The active-site Proton acceptor is Cys90. Substrate contacts are provided by residues 91–92 (GH), His223, and Asp249. The Proton donor role is filled by Cys253. Residue 254 to 255 (GT) coordinates substrate.

The protein belongs to the proline racemase family.

The enzyme catalyses trans-4-hydroxy-L-proline = cis-4-hydroxy-D-proline. Its function is as follows. Catalyzes the epimerization of trans-4-hydroxy-L-proline (t4LHyp) to cis-4-hydroxy-D-proline (c4DHyp). May be involved in a degradation pathway of t4LHyp, which would allow S.novella to grow on t4LHyp as a sole carbon source. This chain is 4-hydroxyproline 2-epimerase, found in Ancylobacter novellus (strain ATCC 8093 / DSM 506 / JCM 20403 / CCM 1077 / IAM 12100 / NBRC 12443 / NCIMB 10456) (Starkeya novella).